We begin with the raw amino-acid sequence, 673 residues long: Annexin A6 (673 aa).

A2 carries the N-acetylalanine modification. Residue S13 is modified to Phosphoserine. Annexin repeat units follow at residues 20 to 91, 92 to 163, 175 to 247, 251 to 322, 363 to 434, 435 to 506, 521 to 595, and 599 to 670; these read FDAN…NLMR, PLAY…VLLQ, DLVQ…AVVK, STPE…KLCG, FNPD…GLMM, PPAH…SLAT, EDAQ…AIVQ, and NKPL…ALCG. Y30 bears the Phosphotyrosine mark. Residues K63, K68, K75, and K81 each carry the N6-acetyllysine modification. A Phosphotyrosine modification is found at Y201. Residues K306, K370, and K418 each carry the N6-acetyllysine modification. S422 is modified (phosphoserine). K483 is subject to N6-acetyllysine. S537 is subject to Phosphoserine. N6-acetyllysine is present on K620.

The protein belongs to the annexin family.

The protein resides in the cytoplasm. It is found in the melanosome. Its function is as follows. May associate with CD21. May regulate the release of Ca(2+) from intracellular stores. In Rattus norvegicus (Rat), this protein is Annexin A6 (Anxa6).